Reading from the N-terminus, the 388-residue chain is Leucine aminopeptidase 1 (388 aa).

A signal peptide spans 1–19 (MKLPALLILGVAASTMVLA). The propeptide occupies 20-88 (AIAPDQVPLN…LPKVFPTPAV (69 aa)). N-linked (GlcNAc...) asparagine glycosylation is found at Asn96, Asn119, Asn149, Asn164, and Asn181. His189 and Asp207 together coordinate Zn(2+). An N-linked (GlcNAc...) asparagine glycan is attached at Asn232. Zn(2+)-binding residues include Glu246 and Asp273. A disulfide bond links Cys322 and Cys326. A Zn(2+)-binding site is contributed by His355.

This sequence belongs to the peptidase M28 family. M28E subfamily. In terms of assembly, monomer. It depends on Zn(2+) as a cofactor.

It localises to the secreted. Extracellular aminopeptidase that allows assimilation of proteinaceous substrates. This Paracoccidioides brasiliensis (strain Pb03) protein is Leucine aminopeptidase 1 (LAP1).